We begin with the raw amino-acid sequence, 435 residues long: Enolase (435 aa).

Glutamine 163 is a binding site for (2R)-2-phosphoglycerate. Glutamate 205 acts as the Proton donor in catalysis. Aspartate 243, glutamate 292, and aspartate 319 together coordinate Mg(2+). (2R)-2-phosphoglycerate-binding residues include lysine 344, arginine 373, serine 374, and lysine 395. The active-site Proton acceptor is the lysine 344.

This sequence belongs to the enolase family. The cofactor is Mg(2+).

It is found in the cytoplasm. Its subcellular location is the secreted. It localises to the cell surface. The enzyme catalyses (2R)-2-phosphoglycerate = phosphoenolpyruvate + H2O. It functions in the pathway carbohydrate degradation; glycolysis; pyruvate from D-glyceraldehyde 3-phosphate: step 4/5. Catalyzes the reversible conversion of 2-phosphoglycerate (2-PG) into phosphoenolpyruvate (PEP). It is essential for the degradation of carbohydrates via glycolysis. In Streptococcus suis (strain 98HAH33), this protein is Enolase.